A 192-amino-acid chain; its full sequence is Nucleoside triphosphate pyrophosphatase (192 aa).

Aspartate 73 serves as the catalytic Proton acceptor.

The protein belongs to the Maf family. It depends on a divalent metal cation as a cofactor.

It localises to the cytoplasm. The enzyme catalyses a ribonucleoside 5'-triphosphate + H2O = a ribonucleoside 5'-phosphate + diphosphate + H(+). The catalysed reaction is a 2'-deoxyribonucleoside 5'-triphosphate + H2O = a 2'-deoxyribonucleoside 5'-phosphate + diphosphate + H(+). Its function is as follows. Nucleoside triphosphate pyrophosphatase. May have a dual role in cell division arrest and in preventing the incorporation of modified nucleotides into cellular nucleic acids. This chain is Nucleoside triphosphate pyrophosphatase, found in Ehrlichia chaffeensis (strain ATCC CRL-10679 / Arkansas).